A 292-amino-acid polypeptide reads, in one-letter code: Shikimate dehydrogenase (NADP(+)) (292 aa).

Residues 25-27 (SKS) and T72 contribute to the shikimate site. K76 functions as the Proton acceptor in the catalytic mechanism. Residues N97 and D113 each coordinate shikimate. NADP(+)-binding positions include 137 to 141 (GAGGA), 161 to 166 (NRTQSK), and M230. Shikimate is bound at residue Y232. An NADP(+)-binding site is contributed by G254.

Belongs to the shikimate dehydrogenase family. In terms of assembly, homodimer.

The catalysed reaction is shikimate + NADP(+) = 3-dehydroshikimate + NADPH + H(+). Its pathway is metabolic intermediate biosynthesis; chorismate biosynthesis; chorismate from D-erythrose 4-phosphate and phosphoenolpyruvate: step 4/7. Involved in the biosynthesis of the chorismate, which leads to the biosynthesis of aromatic amino acids. Catalyzes the reversible NADPH linked reduction of 3-dehydroshikimate (DHSA) to yield shikimate (SA). This Shewanella sp. (strain MR-7) protein is Shikimate dehydrogenase (NADP(+)).